The sequence spans 625 residues: Chaperone protein HtpG (625 aa).

The segment at 1-341 (MERKEFKAES…SEDLSLNISR (341 aa)) is a; substrate-binding. The tract at residues 342–551 (EMLQHDRQLK…EGEVSIEMEK (210 aa)) is b. Residues 552-625 (VLRAMPDNQN…FSNDICKVMA (74 aa)) form a c region.

Belongs to the heat shock protein 90 family. In terms of assembly, homodimer.

Its subcellular location is the cytoplasm. In terms of biological role, molecular chaperone. Has ATPase activity. This Halalkalibacterium halodurans (strain ATCC BAA-125 / DSM 18197 / FERM 7344 / JCM 9153 / C-125) (Bacillus halodurans) protein is Chaperone protein HtpG.